We begin with the raw amino-acid sequence, 471 residues long: Putative multidrug resistance protein MdtD (471 aa).

At 1–11 (MTDLPDSTRWQ) the chain is on the periplasmic side. The chain crosses the membrane as a helical span at residues 12–32 (LWIVAFGFFMQSLDTTIVNTA). Over 33-48 (LPSMAQSLGESPLHMH) the chain is Cytoplasmic. The chain crosses the membrane as a helical span at residues 49 to 69 (MVIVSYVLTVAVMLPASGWLA). Over 70 to 76 (DKVGVRN) the chain is Periplasmic. Residues 77–97 (IFFTAIVLFTLGSLFCALSGT) traverse the membrane as a helical segment. At 98 to 101 (LNEL) the chain is on the cytoplasmic side. A helical membrane pass occupies residues 102–124 (LLARALQGVGGAMMVPVGRLTVM). At 125–137 (KIVPREQYMAAMT) the chain is on the periplasmic side. A helical membrane pass occupies residues 138–158 (FVTLPGQVGPLLGPALGGLLV). Over 159-164 (EYASWH) the chain is Cytoplasmic. A helical transmembrane segment spans residues 165 to 185 (WIFLINIPVGIIGAIATLMLM). At 186–196 (PNYTMQTRRFD) the chain is on the periplasmic side. Residues 197-217 (LSGFLLLAVGMAVLTLALDGS) traverse the membrane as a helical segment. The Cytoplasmic portion of the chain corresponds to 218–224 (KGTGLSP). Residues 225 to 245 (LAITGLVAVGVVALVLYLLHA) form a helical membrane-spanning segment. Topologically, residues 246 to 262 (RNNNRALFSLKLFRTRT) are periplasmic. The helical transmembrane segment at 263–283 (FSLGLAGSFAGRIGSGMLPFM) threads the bilayer. The Cytoplasmic portion of the chain corresponds to 284-285 (TP). Residues 286-306 (VFLQIGLGFSPFHAGLMMIPM) form a helical membrane-spanning segment. At 307 to 341 (VLGSMGMKRIVVQVVNRFGYRRVLVATTLGLSLVT) the chain is on the periplasmic side. The helical transmembrane segment at 342-362 (LLFMTTALLGWYYVLPFVLFL) threads the bilayer. Over 363 to 395 (QGMVNSTRFSSMNTLTLKDLPDNLASSGNSLLS) the chain is Cytoplasmic. The helical transmembrane segment at 396-416 (MIMQLSMSIGVTIAGLLLGLF) threads the bilayer. Residues 417-430 (GSQHVSVDSSTTQT) are Periplasmic-facing. A helical transmembrane segment spans residues 431-451 (VFMYTWLSMAFIIALPAFIFA). Residues 452–471 (RVPNDTHQNVAISRRKRSAQ) are Cytoplasmic-facing.

Belongs to the major facilitator superfamily. TCR/Tet family.

It localises to the cell inner membrane. The chain is Putative multidrug resistance protein MdtD from Escherichia coli O157:H7.